The chain runs to 420 residues: LanC-like protein 3 (420 aa).

Belongs to the LanC-like protein family.

This chain is LanC-like protein 3 (LANCL3), found in Homo sapiens (Human).